The following is a 335-amino-acid chain: Nod factor export ATP-binding protein I (335 aa).

Residues 1–10 (MTQEVPRRLE) are compositionally biased toward basic and acidic residues. The segment at 1-22 (MTQEVPRRLEPSPFEWKGDAGP) is disordered. The 231-residue stretch at 37-267 (IDLASVTKSY…KIGCQVIEIY (231 aa)) folds into the ABC transporter domain. An ATP-binding site is contributed by 69-76 (GPNGAGKS).

Belongs to the ABC transporter superfamily. Lipooligosaccharide exporter (TC 3.A.1.102) family. As to quaternary structure, the complex is composed of two ATP-binding proteins (NodI) and two transmembrane proteins (NodJ).

Its subcellular location is the cell inner membrane. Part of the ABC transporter complex NodIJ involved in the export of the nodulation factors (Nod factors), the bacterial signal molecules that induce symbiosis and subsequent nodulation induction. Nod factors are LCO (lipo-chitin oligosaccharide), a modified beta-1,4-linked N-acetylglucosamine oligosaccharide. This subunit is responsible for energy coupling to the transport system. The chain is Nod factor export ATP-binding protein I from Rhizobium meliloti (Ensifer meliloti).